The sequence spans 684 residues: Hydroxyproline O-galactosyltransferase GALT2 (684 aa).

Residues methionine 1 to histidine 22 lie on the Cytoplasmic side of the membrane. A helical; Signal-anchor for type II membrane protein transmembrane segment spans residues phenylalanine 23 to isoleucine 43. Residues glutamate 44–arginine 684 lie on the Lumenal side of the membrane. The interval lysine 80–isoleucine 102 is disordered. 3 N-linked (GlcNAc...) asparagine glycosylation sites follow: asparagine 103, asparagine 127, and asparagine 162. Positions arginine 191–threonine 405 constitute a Galectin domain. 2 N-linked (GlcNAc...) asparagine glycosylation sites follow: asparagine 524 and asparagine 632.

It belongs to the glycosyltransferase 31 family. Mn(2+) is required as a cofactor. Expressed in stems and at lower levels in cauline leaves and siliques.

The protein localises to the golgi apparatus membrane. It participates in protein modification; protein glycosylation. Possesses hydroxyproline O-galactosyltransferase activity. Transfers galactose from UDP-galactose to hydroxyproline residues in the arabinogalactan proteins (AGPs). Is specific for AGPs containing non-contiguous peptidyl hydroxyproline residues. Utilizes UDP-galactose solely as sugar donor. The addition of galactose onto the peptidyl hydroxyproline residues in AGP core proteins represents the first committed step in arabinogalactan polysaccharide addition. AGP glycans play essential roles in both vegetative and reproductive plant growth. This chain is Hydroxyproline O-galactosyltransferase GALT2, found in Arabidopsis thaliana (Mouse-ear cress).